Here is a 1741-residue protein sequence, read N- to C-terminus: S-layer protein (1741 aa).

Positions 894–904 are enriched in polar residues; the sequence is SFTSDSANGSG. The segment at 894-913 is disordered; that stretch reads SFTSDSANGSGHSVEGGTGD.

Glycosylated.

It localises to the secreted. It is found in the cell wall. The protein resides in the S-layer. Its function is as follows. S-layer protein. The S-layer is a paracrystalline mono-layered assembly of proteins which coats the surface of bacteria. Under laboratory conditions, has a supportive but not a critical role in the function of the cyanobacterium. Shows no apparent hemolytic activity against sheep erythrocytes, however, a slight hemolytic activity is detected during the conformational change caused by the rebinding of Ca(2+). The chain is S-layer protein from Synechocystis sp. (strain ATCC 27184 / PCC 6803 / Kazusa).